We begin with the raw amino-acid sequence, 353 residues long: Protein RecA (353 aa).

G75–T82 contacts ATP.

The protein belongs to the RecA family.

The protein resides in the cytoplasm. In terms of biological role, can catalyze the hydrolysis of ATP in the presence of single-stranded DNA, the ATP-dependent uptake of single-stranded DNA by duplex DNA, and the ATP-dependent hybridization of homologous single-stranded DNAs. It interacts with LexA causing its activation and leading to its autocatalytic cleavage. The chain is Protein RecA from Cupriavidus pinatubonensis (strain JMP 134 / LMG 1197) (Cupriavidus necator (strain JMP 134)).